The following is a 227-amino-acid chain: Cytochrome c oxidase subunit 2 (227 aa).

At 1–14 (MAYPMQLGLQDATS) the chain is on the mitochondrial intermembrane side. A helical transmembrane segment spans residues 15-45 (PIMEELMNFHDHTLMIVFLISSLVLYLISLM). At 46–59 (LTTKLIHTNTMDAQ) the chain is on the mitochondrial matrix side. The helical transmembrane segment at 60–87 (EVETIWTILPAIILVLIALPSLRILYMM) threads the bilayer. The Mitochondrial intermembrane segment spans residues 88-227 (DEINNPVLTV…FFENWSSSMT (140 aa)). Cu cation-binding residues include H161, C196, E198, C200, H204, and M207. E198 provides a ligand contact to Mg(2+).

This sequence belongs to the cytochrome c oxidase subunit 2 family. Component of the cytochrome c oxidase (complex IV, CIV), a multisubunit enzyme composed of 14 subunits. The complex is composed of a catalytic core of 3 subunits MT-CO1, MT-CO2 and MT-CO3, encoded in the mitochondrial DNA, and 11 supernumerary subunits COX4I, COX5A, COX5B, COX6A, COX6B, COX6C, COX7A, COX7B, COX7C, COX8 and NDUFA4, which are encoded in the nuclear genome. The complex exists as a monomer or a dimer and forms supercomplexes (SCs) in the inner mitochondrial membrane with NADH-ubiquinone oxidoreductase (complex I, CI) and ubiquinol-cytochrome c oxidoreductase (cytochrome b-c1 complex, complex III, CIII), resulting in different assemblies (supercomplex SCI(1)III(2)IV(1) and megacomplex MCI(2)III(2)IV(2)). Found in a complex with TMEM177, COA6, COX18, COX20, SCO1 and SCO2. Interacts with TMEM177 in a COX20-dependent manner. Interacts with COX20. Interacts with COX16. Requires Cu cation as cofactor.

Its subcellular location is the mitochondrion inner membrane. The catalysed reaction is 4 Fe(II)-[cytochrome c] + O2 + 8 H(+)(in) = 4 Fe(III)-[cytochrome c] + 2 H2O + 4 H(+)(out). Component of the cytochrome c oxidase, the last enzyme in the mitochondrial electron transport chain which drives oxidative phosphorylation. The respiratory chain contains 3 multisubunit complexes succinate dehydrogenase (complex II, CII), ubiquinol-cytochrome c oxidoreductase (cytochrome b-c1 complex, complex III, CIII) and cytochrome c oxidase (complex IV, CIV), that cooperate to transfer electrons derived from NADH and succinate to molecular oxygen, creating an electrochemical gradient over the inner membrane that drives transmembrane transport and the ATP synthase. Cytochrome c oxidase is the component of the respiratory chain that catalyzes the reduction of oxygen to water. Electrons originating from reduced cytochrome c in the intermembrane space (IMS) are transferred via the dinuclear copper A center (CU(A)) of subunit 2 and heme A of subunit 1 to the active site in subunit 1, a binuclear center (BNC) formed by heme A3 and copper B (CU(B)). The BNC reduces molecular oxygen to 2 water molecules using 4 electrons from cytochrome c in the IMS and 4 protons from the mitochondrial matrix. The polypeptide is Cytochrome c oxidase subunit 2 (MT-CO2) (Desmodillus auricularis (Cape short-eared gerbil)).